The sequence spans 427 residues: Septin-8-A (427 aa).

Residues 39–305 (QGFCFNILCV…ELYRRCKLEE (267 aa)) form the Septin-type G domain. The tract at residues 49 to 56 (GETGIGKS) is G1 motif. Residues 49-56 (GETGIGKS), G104, 185-193 (KADTISKSE), G239, and R254 each bind GTP. The tract at residues 101-104 (DTVG) is G3 motif. The segment at 184-187 (AKAD) is G4 motif. Positions 320 to 409 (LQETYEAKRK…KAAMEALQSQ (90 aa)) form a coiled coil. Residues 376 to 389 (QEESKKVEDKRRDL) show a composition bias toward basic and acidic residues. Residues 376 to 427 (QEESKKVEDKRRDLEEEMNSFNRRKAAMEALQSQSFQATSQQPLKKDKDRKN) are disordered. A compositionally biased stretch (polar residues) spans 406–418 (LQSQSFQATSQQP).

The protein belongs to the TRAFAC class TrmE-Era-EngA-EngB-Septin-like GTPase superfamily. Septin GTPase family.

In Xenopus laevis (African clawed frog), this protein is Septin-8-A (sept8-a).